The chain runs to 199 residues: 7-methyl-GTP pyrophosphatase (199 aa).

Aspartate 76 acts as the Proton acceptor in catalysis.

It belongs to the Maf family. YceF subfamily. It depends on a divalent metal cation as a cofactor.

Its subcellular location is the cytoplasm. It carries out the reaction N(7)-methyl-GTP + H2O = N(7)-methyl-GMP + diphosphate + H(+). Nucleoside triphosphate pyrophosphatase that hydrolyzes 7-methyl-GTP (m(7)GTP). May have a dual role in cell division arrest and in preventing the incorporation of modified nucleotides into cellular nucleic acids. The protein is 7-methyl-GTP pyrophosphatase of Rhizobium meliloti (strain 1021) (Ensifer meliloti).